The following is a 151-amino-acid chain: Small ribosomal subunit protein uS15 (151 aa).

The tract at residues methionine 1–threonine 20 is disordered.

This sequence belongs to the universal ribosomal protein uS15 family. Part of the 30S ribosomal subunit.

The sequence is that of Small ribosomal subunit protein uS15 from Methanococcus vannielii (strain ATCC 35089 / DSM 1224 / JCM 13029 / OCM 148 / SB).